Consider the following 2342-residue polypeptide: Outer kinetochore KNL1 complex subunit KNL1 (2342 aa).

The segment at 1-56 (MDGVSSEANEENDNIERPVRRRHSSILKPPRSPLQDLRGGNERVQESNALRNKKNS) is disordered. The segment at 1–250 (MDGVSSEANE…FNDFIKRLKT (250 aa)) is may mediate oligomerization. The interval 1–728 (MDGVSSEANE…QSLFSTTKPL (728 aa)) is interaction with BUB1 and BUB1B. Interaction with microtubules regions lie at residues 17 to 34 (RPVR…RSPL) and 53 to 80 (KKNS…VRKS). Positions 23 to 80 (HSSILKPPRSPLQDLRGGNERVQESNALRNKKNSRRVSFADTIKVFQTESHMKIVRKS) are interaction with PP1CA; contains the protein phosphatase 1 (PP1) interaction motifs SILK, RVXF and phi-phi. At Ser-24 the chain carries Phosphoserine; by AURKB. At Ser-32 the chain carries Phosphoserine. A Phosphoserine; by AURKB modification is found at Ser-60. An interaction with BUB1 region spans residues 174–190 (ENQMDLTSSHTVMITKG). The segment at 210–226 (ANLKLHTEDSRMKKEVN) is interaction with BUB1B. Thr-539 bears the Phosphothreonine mark. 2 positions are modified to phosphoserine: Ser-578 and Ser-584. A Phosphothreonine modification is found at Thr-586. The interval 620–646 (APESTSESHSQSKSSSDECEEITKSRN) is disordered. A compositionally biased stretch (low complexity) spans 622–633 (ESTSESHSQSKS). A Phosphoserine modification is found at Ser-767. The segment at 855-1201 (EDESVQKPKF…VTDSHTVFID (347 aa)) is 2 X 104 AA approximate repeats. The stretch at 885–989 (DKTIVFSEDD…MTESHTVFID (105 aa)) is repeat 1. At Thr-901 the chain carries Phosphothreonine. Phosphoserine occurs at positions 956, 1039, 1076, and 1088. Repeat 2 spans residues 1099–1201 (DKTIVFSENH…VTDSHTVFID (103 aa)). At Ser-1448 the chain carries Phosphoserine. The tract at residues 1639–1662 (SNAKDSRDEENKKSHNGAETTSLP) is disordered. Residues 1642 to 1651 (KDSRDEENKK) are compositionally biased toward basic and acidic residues. Phosphoserine is present on residues Ser-1675 and Ser-1773. The Nuclear localization signal signature appears at 1789-1803 (TWVQEEEDIHKEKKI). Ser-1831 carries the post-translational modification Phosphoserine. Phosphoserine; by TTK is present on residues Ser-1831 and Ser-1834. 2 positions are modified to phosphoserine: Ser-1845 and Ser-1860. The interval 1981–2108 (KMRHCSDKEL…LLELEVQKEQ (128 aa)) is required for interaction with ZWINT. Positions 2024–2133 (VQSAQNEREK…EELLDQLSLS (110 aa)) form a coiled coil. The segment at 2091 to 2311 (EEEELQRNLL…GNTSQDDIAT (221 aa)) is interaction with NSL1, DSN1 and required for assembly into the outer kinetochore.

As to quaternary structure, component of the KNL1 complex composed of KNL1 and ZWINT. Part of the ten-subunit outer kinetochore KMN network that includes the KNL1, MIS12 and NDC80 complexes; a bioriented kinetochore contains approximately 150 copies of the network. Interacts (via C-terminus) with the MIS12 complex subunits NSL1 (via C-terminus), PMF1 and DSN1; the interaction is direct. Interacts (via N-terminal region) with BUB1B (via BUB1 N-terminal domain); the interaction is direct and is required for cell cycle arrest upon activation of the mitotic spindle assembly checkpoint. Interacts (via N-terminal region) with BUB1 (via BUB1 N-terminal domain); the interaction is direct. Interacts with the protein phosphatase PP1 subunit PPP1CA; the interaction is direct and mutually exclusive with binding to microtubules. Interacts with the protein phosphatase PP1 subunit PPP1CC; the interaction is direct and mutually exclusive with binding to microtubules. Phosphorylation by AURKB negatively regulates its interaction with protein phosphatase 1 (PP1) subunit PPP1CA and with microtubules. As to expression, highly expressed in testis, where it is localized in germ cells, in particular in spermatocytes and in the pre-acrosome of round spermatids. Detected in the acrosome of ejaculated spermatozoa. Detected in adult thymus, bone marrow, colon, small intestine, appendix and placenta, and in fetal liver and thymus.

It is found in the nucleus. It localises to the chromosome. The protein resides in the centromere. Its subcellular location is the kinetochore. The protein localises to the cytoplasm. Its function is as follows. Acts as a component of the outer kinetochore KNL1 complex that serves as a docking point for spindle assembly checkpoint components and mediates microtubule-kinetochore interactions. Kinetochores, consisting of a centromere-associated inner segment and a microtubule-contacting outer segment, play a crucial role in chromosome segregation by mediating the physical connection between centromeric DNA and spindle microtubules. The outer kinetochore is made up of the ten-subunit KMN network, comprising the MIS12, NDC80 and KNL1 complexes, and auxiliary microtubule-associated components; together they connect the outer kinetochore with the inner kinetochore, bind microtubules, and mediate interactions with mitotic checkpoint proteins that delay anaphase until chromosomes are bioriented on the spindle. Required for kinetochore binding by a distinct subset of kMAPs (kinetochore-bound microtubule-associated proteins) and motors. Acts in coordination with CENPK to recruit the NDC80 complex to the outer kinetochore. Can bind either to microtubules or to the protein phosphatase 1 (PP1) catalytic subunits PPP1CA and PPP1CC (via overlapping binding sites), it has higher affinity for PP1. Recruits MAD2L1 to the kinetochore and also directly links BUB1 and BUB1B to the kinetochore. In addition to orienting mitotic chromosomes, it is also essential for alignment of homologous chromosomes during meiotic metaphase I. In meiosis I, required to activate the spindle assembly checkpoint at unattached kinetochores to correct erroneous kinetochore-microtubule attachments. The polypeptide is Outer kinetochore KNL1 complex subunit KNL1 (Homo sapiens (Human)).